A 365-amino-acid chain; its full sequence is tRNA-specific 2-thiouridylase MnmA (365 aa).

Residues 14–21 and leucine 40 contribute to the ATP site; that span reads AMSGGVDS. The active-site Nucleophile is cysteine 108. Cysteine 108 and cysteine 204 are joined by a disulfide. Glycine 132 contacts ATP. An interaction with tRNA region spans residues 154 to 156; that stretch reads KDQ. The active-site Cysteine persulfide intermediate is the cysteine 204.

This sequence belongs to the MnmA/TRMU family.

The protein localises to the cytoplasm. The catalysed reaction is S-sulfanyl-L-cysteinyl-[protein] + uridine(34) in tRNA + AH2 + ATP = 2-thiouridine(34) in tRNA + L-cysteinyl-[protein] + A + AMP + diphosphate + H(+). Catalyzes the 2-thiolation of uridine at the wobble position (U34) of tRNA, leading to the formation of s(2)U34. The polypeptide is tRNA-specific 2-thiouridylase MnmA (Rickettsia rickettsii (strain Iowa)).